Here is a 195-residue protein sequence, read N- to C-terminus: Thioredoxin reductase-like selenoprotein T (195 aa).

Residues 1-19 (MRLLLLLLVAASAVVRSEA) form the signal peptide. A cross-link (cysteinyl-selenocysteine (Cys-Sec)) is located at residues 46 to 49 (CVSU). Residue selenocysteine 49 is a non-standard amino acid, selenocysteine. Residues 85-103 (IASFLSVFKLVLIGLIIVG) form a helical membrane-spanning segment.

It belongs to the SelWTH family. Selenoprotein T subfamily. In terms of processing, may contain a selenide-sulfide bond between Cys-46 and Sec-49. This bond is speculated to serve as redox-active pair. Ubiquitous. Highly expressed in the endocrine pancreas. Expressed at low levels in the adult brain.

The protein resides in the endoplasmic reticulum membrane. It catalyses the reaction [thioredoxin]-dithiol + NADP(+) = [thioredoxin]-disulfide + NADPH + H(+). In terms of biological role, selenoprotein with thioredoxin reductase-like oxidoreductase activity. Protects dopaminergic neurons against oxidative stress and cell death. Involved in ADCYAP1/PACAP-induced calcium mobilization and neuroendocrine secretion. Plays a role in fibroblast anchorage and redox regulation. In gastric smooth muscle, modulates the contraction processes through the regulation of calcium release and MYLK activation. In pancreatic islets, involved in the control of glucose homeostasis, contributes to prolonged ADCYAP1/PACAP-induced insulin secretion. In Mus musculus (Mouse), this protein is Thioredoxin reductase-like selenoprotein T.